The chain runs to 436 residues: 3-ketoacyl-CoA thiolase (436 aa).

The active-site Acyl-thioester intermediate is the cysteine 99. Catalysis depends on proton acceptor residues histidine 392 and cysteine 422.

The protein belongs to the thiolase-like superfamily. Thiolase family. In terms of assembly, heterotetramer of two alpha chains (FadJ) and two beta chains (FadI).

The protein resides in the cytoplasm. It carries out the reaction an acyl-CoA + acetyl-CoA = a 3-oxoacyl-CoA + CoA. Its pathway is lipid metabolism; fatty acid beta-oxidation. Catalyzes the final step of fatty acid oxidation in which acetyl-CoA is released and the CoA ester of a fatty acid two carbons shorter is formed. This is 3-ketoacyl-CoA thiolase from Escherichia coli (strain ATCC 8739 / DSM 1576 / NBRC 3972 / NCIMB 8545 / WDCM 00012 / Crooks).